Consider the following 512-residue polypeptide: ATP synthase subunit alpha (512 aa).

169–176 (GDRQTGKT) serves as a coordination point for ATP.

Belongs to the ATPase alpha/beta chains family. As to quaternary structure, F-type ATPases have 2 components, CF(1) - the catalytic core - and CF(0) - the membrane proton channel. CF(1) has five subunits: alpha(3), beta(3), gamma(1), delta(1), epsilon(1). CF(0) has four main subunits: a(1), b(1), b'(1) and c(9-12).

It is found in the cell inner membrane. It carries out the reaction ATP + H2O + 4 H(+)(in) = ADP + phosphate + 5 H(+)(out). Produces ATP from ADP in the presence of a proton gradient across the membrane. The alpha chain is a regulatory subunit. The protein is ATP synthase subunit alpha of Jannaschia sp. (strain CCS1).